Consider the following 195-residue polypeptide: MIVGISGSPRRKATEFVLGEALKMLEERGFETKFFTVRGKKISPCQHCDYCLKHKECRIKDDMFELYEMLKDAKGIVMATPVYNGGVSAQIKAVMDRCRALVAADYDFFRGKVGMAIAVGGDRIGGQELAIQQILTFYILNGVIPVSGGSFGANIGATFWSRDTLEGVKEDEEGFRSLRKTVKRFAEMLEKMEGV.

[4Fe-4S] cluster-binding residues include Cys-45, Cys-48, Cys-51, and Cys-57.

Belongs to the SsuE family. Isf subfamily. In terms of assembly, homodimer. Requires FMN as cofactor. [4Fe-4S] cluster is required as a cofactor.

Redox-active protein probably involved in electron transport. This is Iron-sulfur flavoprotein AF_1519 from Archaeoglobus fulgidus (strain ATCC 49558 / DSM 4304 / JCM 9628 / NBRC 100126 / VC-16).